The following is a 301-amino-acid chain: Ornithine carbamoyltransferase (301 aa).

Carbamoyl phosphate is bound by residues R100 and H127–Q130. L-ornithine contacts are provided by residues N158, D221, and S225–M226. Carbamoyl phosphate is bound by residues C260 and R288.

This sequence belongs to the aspartate/ornithine carbamoyltransferase superfamily. OTCase family. Homododecamer.

It localises to the cytoplasm. The catalysed reaction is carbamoyl phosphate + L-ornithine = L-citrulline + phosphate + H(+). It functions in the pathway amino-acid biosynthesis; L-arginine biosynthesis; L-arginine from L-ornithine and carbamoyl phosphate: step 1/3. Functionally, reversibly catalyzes the transfer of the carbamoyl group from carbamoyl phosphate (CP) to the N(epsilon) atom of ornithine (ORN) to produce L-citrulline. This chain is Ornithine carbamoyltransferase (argF), found in Moritella profunda.